A 603-amino-acid polypeptide reads, in one-letter code: Insulin-like growth factor-binding protein complex acid labile subunit (603 aa).

The signal sequence occupies residues 1-23 (MALRTGGPALVVLLAFWVALGPC). One can recognise an LRRNT domain in the interval 32–74 (ASADAEGPQCPVACTCSHDDYTDELSVFCSSKNLTHLPDDIPV). 2 cysteine pairs are disulfide-bonded: Cys-41-Cys-47 and Cys-45-Cys-60. Asn-64, Asn-85, and Asn-96 each carry an N-linked (GlcNAc...) asparagine glycan. 19 LRR repeats span residues 75-96 (STRA…AFQN), 99-120 (SLDF…ALLG), 123-144 (NLYY…LFTH), 147-168 (SLAS…LFQG), 171-192 (HLWD…VFQG), 195-216 (NLHE…LFCG), 219-240 (ELRE…VFVH), 243-264 (RLQK…AFLG), 267-288 (ALRW…TFPG), 291-312 (GLHV…TFKD), 315-336 (FLEE…TFEG), 339-360 (QLEV…AFSG), 363-384 (NVAV…VFQG), 387-408 (KLHS…TFAG), 411-432 (GLRR…SLAG), 435-456 (ELLE…LFQG), 459-480 (HLEY…VLGP), 483-504 (RAFW…LFSS), and 507-528 (RVRY…PGLE). Asn-368 is a glycosylation site (N-linked (GlcNAc...) asparagine). N-linked (GlcNAc...) asparagine glycosylation occurs at Asn-515. Positions 535 to 603 (NPWDCSCPLK…DVSETHFVHC (69 aa)) constitute an LRRCT domain. Disulfide bonds link Cys-539-Cys-581, Cys-541-Cys-603, and Cys-565-Cys-570. Residues Asn-578 and Asn-586 are each glycosylated (N-linked (GlcNAc...) asparagine).

In terms of assembly, forms a ternary complex with IGF1 and IGFBP3. In terms of tissue distribution, brain, kidney, lung, heart, spleen, muscle and liver.

It is found in the secreted. Its subcellular location is the extracellular space. Functionally, may have an important role in regulating the access of circulating IGFs to the tissues. The protein is Insulin-like growth factor-binding protein complex acid labile subunit (Igfals) of Rattus norvegicus (Rat).